Reading from the N-terminus, the 365-residue chain is Caffeic acid 3-O-methyltransferase 1 (365 aa).

130 to 136 (MNQDKVL) contributes to the substrate binding site. A substrate binding region spans residues 162–180 (AFEYHGTDPRFNKVFNKGM). S-adenosyl-L-methionine contacts are provided by G208, D231, D251, M252, and K265. The Proton acceptor role is filled by H269.

It belongs to the class I-like SAM-binding methyltransferase superfamily. Cation-independent O-methyltransferase family. COMT subfamily. Homodimer. In terms of processing, the N-terminus is blocked. As to expression, xylem.

It catalyses the reaction (E)-caffeate + S-adenosyl-L-methionine = (E)-ferulate + S-adenosyl-L-homocysteine + H(+). The protein operates within aromatic compound metabolism; phenylpropanoid biosynthesis. Catalyzes the conversion of caffeic acid to ferulic acid and of 5-hydroxyferulic acid to sinapic acid. The resulting products may subsequently be converted to the corresponding alcohols that are incorporated into lignins. This Populus tremuloides (Quaking aspen) protein is Caffeic acid 3-O-methyltransferase 1 (OMT1).